Here is a 507-residue protein sequence, read N- to C-terminus: Probable allantoinase (507 aa).

Zn(2+)-binding residues include His-105, His-107, Lys-195, His-231, His-294, and Asp-368. Lys-195 bears the N6-carboxylysine mark.

This sequence belongs to the metallo-dependent hydrolases superfamily. Allantoinase family. In terms of assembly, homotetramer. Zn(2+) serves as cofactor. Carboxylation allows a single lysine to coordinate two zinc ions.

It catalyses the reaction (S)-allantoin + H2O = allantoate + H(+). Its pathway is nitrogen metabolism; (S)-allantoin degradation; allantoate from (S)-allantoin: step 1/1. Functionally, catalyzes the conversion of allantoin (5-ureidohydantoin) to allantoate by hydrolytic cleavage of the five-member hydantoin ring. Catalyzes the first step of the ureide allantoin degradation followed by the sequential activity of AAH, UGLYAH and UAH which allows a complete purine breakdown without the intermediate generation of urea. The sequence is that of Probable allantoinase (ALN) from Oryza sativa subsp. japonica (Rice).